The following is a 365-amino-acid chain: WAT1-related protein At4g01430 (365 aa).

10 consecutive transmembrane segments (helical) span residues 7–27 (WAPVIVMLISSVAMGSVNALV), 39–59 (IFGAYRMAISALILVPFSYIW), 76–96 (FISGLLGASLMQFFFLLGLSY), 100–120 (TVSMALVSMLPAITFALALIF), 132–152 (AGVLKVMGTLICIMGAMLLTF), 183–203 (WLLGCLYLVIGTVLLSLWMLF), 216–236 (YSSTCLMSVFASFQCAILSLY), 250–270 (FVILVTLYAGIVGQAMSTVVT), 280–300 (VFVSTFSPVSLVAATLFDFLI), and 305–325 (LYLGSILGSVVTITGLYVFLW). One can recognise an EamA 1 domain in the interval 20-151 (MGSVNALVKK…ICIMGAMLLT (132 aa)). The EamA 2 domain occupies 216-324 (YSSTCLMSVF…VTITGLYVFL (109 aa)). The tract at residues 339–365 (LNSSQFSQNKDNEDHTIANHKDTNLPV) is disordered. The segment covering 348 to 365 (KDNEDHTIANHKDTNLPV) has biased composition (basic and acidic residues).

This sequence belongs to the drug/metabolite transporter (DMT) superfamily. Plant drug/metabolite exporter (P-DME) (TC 2.A.7.4) family.

The protein resides in the membrane. This Arabidopsis thaliana (Mouse-ear cress) protein is WAT1-related protein At4g01430.